Consider the following 507-residue polypeptide: Lysine--tRNA ligase (507 aa).

Residues Glu-406 and Glu-413 each contribute to the Mg(2+) site.

Belongs to the class-II aminoacyl-tRNA synthetase family. As to quaternary structure, homodimer. It depends on Mg(2+) as a cofactor.

The protein resides in the cytoplasm. The enzyme catalyses tRNA(Lys) + L-lysine + ATP = L-lysyl-tRNA(Lys) + AMP + diphosphate. The protein is Lysine--tRNA ligase of Wolinella succinogenes (strain ATCC 29543 / DSM 1740 / CCUG 13145 / JCM 31913 / LMG 7466 / NCTC 11488 / FDC 602W) (Vibrio succinogenes).